The following is a 261-amino-acid chain: Transmembrane protein 106A (261 aa).

Over residues 1 to 10 the composition is skewed to polar residues; sequence MGKAFSQLTS. Residues 1–22 form a disordered region; sequence MGKAFSQLTSQKDEDKSILPDN. The helical transmembrane segment at 93–113 threads the bilayer; it reads LSVFLAVTICLLIFSLTIFFL.

This sequence belongs to the TMEM106 family.

It localises to the cell membrane. Its function is as follows. Activates macrophages and polarizes them into M1-like macrophages through the activation of the MAPK and NF-kappaB signaling pathway. Upon activation, up-regulates the expression of CD80, CD86, CD69 and MHC II on macrophages, and induces the release of pro-inflammatory cytokines such as TNF, IL1B, IL6, CCL2 and nitric oxide. May play a role in inhibition of proliferation and migration. This chain is Transmembrane protein 106A (Tmem106a), found in Rattus norvegicus (Rat).